Consider the following 341-residue polypeptide: MDGLLTPRESAKFIAENSRDVFIDDGGVRRVAELLLAKATGPELRIEGWKAIHELNPRGTDEAAVNWVFVTDTLNFSFWSESDEYKCQVGFGGKTYSGYWSLCAAVNRALDEGIPITSASYYATVTLDEVRHILRSDTDVPMPLIEERHRILNETGKILLEKFGGSFLNCVQKSDKSAQKLLHLVVENFPSYRDVTQFEGKRISFYKRAQILVADTWSVLEGKGDGCFKDISSITMFADYRLPQVLVYLGALKYSNELLEKLLKGEMLFYGNRQEVEIRGCSVWCVELIRDCLLELIEKKGEKTTGEINSILLDYYLWDYARDHREDMKGIPFHHTRCIYY.

Residue Met1 is modified to N-acetylmethionine. 6 residues coordinate queuine: His53, Phe237, Asp239, Asp314, Tyr315, and Asp319. Residue Asp239 is the Nucleophile or transition state stabilizer of the active site.

It belongs to the QNG1 protein family.

The enzyme catalyses queuosine 5'-phosphate + H2O = queuine + D-ribose 5-phosphate. Catalyzes the hydrolysis of queuosine 5'-phosphate, releasing the nucleobase queuine (q). Is required for salvage of queuine from exogenous queuosine (Q) that is imported and then converted to queuosine 5'-phosphate intracellularly. This is Queuosine 5'-phosphate N-glycosylase/hydrolase from Bos taurus (Bovine).